The primary structure comprises 440 residues: Probable exopolygalacturonase C (440 aa).

An N-terminal signal peptide occupies residues 1–21 (MLITNPALLGILASLAPLALG). 4 N-linked (GlcNAc...) asparagine glycosylation sites follow: asparagine 24, asparagine 84, asparagine 151, and asparagine 219. 2 PbH1 repeats span residues 217-238 (GTNISITDSVMYNGDDAIAVNT) and 240-261 (SHNIVFARNTIGYQSHGMSIGS). Catalysis depends on aspartate 231, which acts as the Proton donor. Histidine 255 is an active-site residue. Asparagine 271 is a glycosylation site (N-linked (GlcNAc...) asparagine). A PbH1 3 repeat occupies 272 to 293 (ITNLRFEDVTVIDALYAARFKS). N-linked (GlcNAc...) asparagine glycosylation is found at asparagine 313 and asparagine 350. Cysteine 389 and cysteine 395 are disulfide-bonded. The N-linked (GlcNAc...) asparagine glycan is linked to asparagine 434.

Belongs to the glycosyl hydrolase 28 family.

It is found in the secreted. It carries out the reaction [(1-&gt;4)-alpha-D-galacturonosyl](n) + H2O = alpha-D-galacturonate + [(1-&gt;4)-alpha-D-galacturonosyl](n-1). Specific in hydrolyzing the terminal glycosidic bond of polygalacturonic acid and oligogalacturonates. The protein is Probable exopolygalacturonase C (pgxC) of Neosartorya fischeri (strain ATCC 1020 / DSM 3700 / CBS 544.65 / FGSC A1164 / JCM 1740 / NRRL 181 / WB 181) (Aspergillus fischerianus).